The primary structure comprises 346 residues: Methylthioribose-1-phosphate isomerase (346 aa).

Residues 54 to 56, Arg-91, and Gln-192 contribute to the substrate site; that span reads RGA. Catalysis depends on Asp-233, which acts as the Proton donor. Position 243 to 244 (243 to 244) interacts with substrate; the sequence is NK.

It belongs to the eIF-2B alpha/beta/delta subunits family. MtnA subfamily.

The catalysed reaction is 5-(methylsulfanyl)-alpha-D-ribose 1-phosphate = 5-(methylsulfanyl)-D-ribulose 1-phosphate. The protein operates within amino-acid biosynthesis; L-methionine biosynthesis via salvage pathway; L-methionine from S-methyl-5-thio-alpha-D-ribose 1-phosphate: step 1/6. Its function is as follows. Catalyzes the interconversion of methylthioribose-1-phosphate (MTR-1-P) into methylthioribulose-1-phosphate (MTRu-1-P). This is Methylthioribose-1-phosphate isomerase from Yersinia pseudotuberculosis serotype O:1b (strain IP 31758).